Here is a 327-residue protein sequence, read N- to C-terminus: Malate dehydrogenase (327 aa).

Residue 11–17 (GAAGQIS) participates in NAD(+) binding. 2 residues coordinate substrate: Arg92 and Arg98. NAD(+)-binding positions include Asn105, Gln112, and 129–131 (VGN). Asn131 and Arg162 together coordinate substrate. His187 acts as the Proton acceptor in catalysis.

Belongs to the LDH/MDH superfamily. MDH type 2 family.

The enzyme catalyses (S)-malate + NAD(+) = oxaloacetate + NADH + H(+). Catalyzes the reversible oxidation of malate to oxaloacetate. The polypeptide is Malate dehydrogenase (Saccharophagus degradans (strain 2-40 / ATCC 43961 / DSM 17024)).